A 404-amino-acid chain; its full sequence is tRNA N6-adenosine threonylcarbamoyltransferase, mitochondrial (404 aa).

The transit peptide at 1 to 27 (MFQSCLPGALRSWSRGVFSTSTRPRLV) directs the protein to the mitochondrion. The a divalent metal cation site is built by His135 and His139. Substrate contacts are provided by residues 157 to 161 (LVSGG), Asp190, Gly210, Glu214, 317 to 318 (SN), and Thr345. Position 346 (Asp346) interacts with a divalent metal cation.

Belongs to the KAE1 / TsaD family. As to quaternary structure, monomer. The cofactor is a divalent metal cation.

The protein resides in the mitochondrion. The enzyme catalyses L-threonylcarbamoyladenylate + adenosine(37) in tRNA = N(6)-L-threonylcarbamoyladenosine(37) in tRNA + AMP + H(+). Its function is as follows. Required for the formation of a threonylcarbamoyl group on adenosine at position 37 (t(6)A37) in mitochondrial tRNAs that read codons beginning with adenine. Probably involved in the transfer of the threonylcarbamoyl moiety of threonylcarbamoyl-AMP (TC-AMP) to the N6 group of A37. Involved in mitochondrial genome maintenance. The chain is tRNA N6-adenosine threonylcarbamoyltransferase, mitochondrial from Danio rerio (Zebrafish).